The primary structure comprises 393 residues: MTVPATRKDLMIVNMGPHHPSMHGVLRLIVTLDGEDVIDCEPILGYLHRGMEKIAENRTIIQYLPYVTRWDYLATMFTEAITVNAPEQLGNIQVPKRASYIRVIMLELSRIASHLLWLGPFMADIGAQTPFFYIFRERELLYDLFEAATGMRMMHNYFRIGGVATDLPYGWIDKCFDFCDYFLTGVVEYQKLITQNPIFLERVEGIGIIGGEEAINWGLSGPMLRASGIQWDLRKVDRYECYDEFNWEVQWQKEGDSLSRYLVRIGEMTESIKIIQQALEGIPGGPYENLEVRRFDKTKDSEWNDFEYRFISKKPSPSFELSKQELYVRVEAPKGELGIFLIGDNSVFPWRWKIRPPGFINLQILPQLVKRMKLADIMTILGSIDIIMGEVDR.

The protein belongs to the complex I 49 kDa subunit family. As to quaternary structure, NDH is composed of at least 16 different subunits, 5 of which are encoded in the nucleus.

It localises to the plastid. The protein resides in the chloroplast thylakoid membrane. The enzyme catalyses a plastoquinone + NADH + (n+1) H(+)(in) = a plastoquinol + NAD(+) + n H(+)(out). The catalysed reaction is a plastoquinone + NADPH + (n+1) H(+)(in) = a plastoquinol + NADP(+) + n H(+)(out). In terms of biological role, NDH shuttles electrons from NAD(P)H:plastoquinone, via FMN and iron-sulfur (Fe-S) centers, to quinones in the photosynthetic chain and possibly in a chloroplast respiratory chain. The immediate electron acceptor for the enzyme in this species is believed to be plastoquinone. Couples the redox reaction to proton translocation, and thus conserves the redox energy in a proton gradient. The protein is NAD(P)H-quinone oxidoreductase subunit H, chloroplastic of Piper cenocladum (Ant piper).